Here is a 159-residue protein sequence, read N- to C-terminus: Bacterial non-heme ferritin (159 aa).

Residues 1 to 145 (MISEKLQNAI…GIVDKIKRAG (145 aa)) enclose the Ferritin-like diiron domain. Positions 17, 50, 53, 94, and 127 each coordinate Fe cation.

This sequence belongs to the ferritin family. Prokaryotic subfamily. As to quaternary structure, homooligomer of 24 subunits that assemble into a spherical protein shell (12 +/- 1 nM diameter) that can sequester at least 2000 iron atoms.

The enzyme catalyses 4 Fe(2+) + O2 + 6 H2O = 4 iron(III) oxide-hydroxide + 12 H(+). May alleviate iron toxicity in the presence of oxygen. This chain is Bacterial non-heme ferritin (ftnA), found in Bacteroides fragilis (strain 638R).